Reading from the N-terminus, the 270-residue chain is Tryptophan synthase alpha chain (270 aa).

Residues Glu-49 and Asp-60 each act as proton acceptor in the active site.

The protein belongs to the TrpA family. Tetramer of two alpha and two beta chains.

It carries out the reaction (1S,2R)-1-C-(indol-3-yl)glycerol 3-phosphate + L-serine = D-glyceraldehyde 3-phosphate + L-tryptophan + H2O. It functions in the pathway amino-acid biosynthesis; L-tryptophan biosynthesis; L-tryptophan from chorismate: step 5/5. Its function is as follows. The alpha subunit is responsible for the aldol cleavage of indoleglycerol phosphate to indole and glyceraldehyde 3-phosphate. In Pseudomonas fluorescens (strain Pf0-1), this protein is Tryptophan synthase alpha chain.